Reading from the N-terminus, the 463-residue chain is L-seryl-tRNA(Sec) selenium transferase (463 aa).

Lys-295 is subject to N6-(pyridoxal phosphate)lysine.

Belongs to the SelA family. Homodecamer; pentamer of dimers. Binds only one seryl-tRNA(Sec) per dimer. Pyridoxal 5'-phosphate is required as a cofactor.

The protein localises to the cytoplasm. It catalyses the reaction L-seryl-tRNA(Sec) + selenophosphate + H(+) = L-selenocysteinyl-tRNA(Sec) + phosphate. The protein operates within aminoacyl-tRNA biosynthesis; selenocysteinyl-tRNA(Sec) biosynthesis; selenocysteinyl-tRNA(Sec) from L-seryl-tRNA(Sec) (bacterial route): step 1/1. In terms of biological role, converts seryl-tRNA(Sec) to selenocysteinyl-tRNA(Sec) required for selenoprotein biosynthesis. This chain is L-seryl-tRNA(Sec) selenium transferase, found in Shigella boydii serotype 4 (strain Sb227).